The following is a 569-amino-acid chain: Myotubularin-related protein 9 (569 aa).

In terms of domain architecture, Myotubularin phosphatase spans 134 to 513; it reads GWSAFDLEQE…QCIKIWDRLF (380 aa).

Belongs to the protein-tyrosine phosphatase family. Non-receptor class myotubularin subfamily. As to quaternary structure, heterodimer with lipid phosphatase mtm-6.

The protein resides in the cytoplasm. It is found in the membrane. Its function is as follows. May act as a regulatory subunit for mtm-6. In association with phosphatase mtm-6, plays a role in endosome trafficking probably by regulating phosphatidylinositol-3-phosphate levels. Regulates fluid phase endocytosis in coelomocytes. Regulates posterior migration of QL neuroblast descendants and the anterior migration of QR neuroblast descendants and HSN neurons during larval development probably by controlling Wnt ligand secretion through the regulation of sorting receptor mig-14 trafficking. Involved in the formation of correct synapse number in DA9 motor neurons. The protein is Myotubularin-related protein 9 of Caenorhabditis elegans.